A 185-amino-acid polypeptide reads, in one-letter code: Ribosome-recycling factor (185 aa).

Belongs to the RRF family.

Its subcellular location is the cytoplasm. In terms of biological role, responsible for the release of ribosomes from messenger RNA at the termination of protein biosynthesis. May increase the efficiency of translation by recycling ribosomes from one round of translation to another. In Heliobacterium modesticaldum (strain ATCC 51547 / Ice1), this protein is Ribosome-recycling factor.